The following is a 443-amino-acid chain: ATP-dependent protease ATPase subunit HslU (443 aa).

ATP-binding positions include I18, 60–65 (GVGKTE), D256, E321, and R393.

The protein belongs to the ClpX chaperone family. HslU subfamily. As to quaternary structure, a double ring-shaped homohexamer of HslV is capped on each side by a ring-shaped HslU homohexamer. The assembly of the HslU/HslV complex is dependent on binding of ATP.

The protein localises to the cytoplasm. ATPase subunit of a proteasome-like degradation complex; this subunit has chaperone activity. The binding of ATP and its subsequent hydrolysis by HslU are essential for unfolding of protein substrates subsequently hydrolyzed by HslV. HslU recognizes the N-terminal part of its protein substrates and unfolds these before they are guided to HslV for hydrolysis. This Buchnera aphidicola subsp. Acyrthosiphon pisum (strain APS) (Acyrthosiphon pisum symbiotic bacterium) protein is ATP-dependent protease ATPase subunit HslU.